A 421-amino-acid polypeptide reads, in one-letter code: Extracellular signal-regulated kinase 1 (421 aa).

Residues 70-375 (YQILEIVGEG…VEDALKHPYL (306 aa)) enclose the Protein kinase domain. ATP contacts are provided by residues 76 to 84 (VGEGAYGIV) and Lys-99. Asp-194 functions as the Proton acceptor in the catalytic mechanism. Thr-230 carries the post-translational modification Phosphothreonine. The short motif at 230 to 232 (TEY) is the TXY element. Residue Tyr-232 is modified to Phosphotyrosine.

It belongs to the protein kinase superfamily. CMGC Ser/Thr protein kinase family. MAP kinase subfamily. Mg(2+) is required as a cofactor. Post-translationally, dually phosphorylated on Thr-230 and Tyr-232, which activates the enzyme.

The enzyme catalyses L-seryl-[protein] + ATP = O-phospho-L-seryl-[protein] + ADP + H(+). It carries out the reaction L-threonyl-[protein] + ATP = O-phospho-L-threonyl-[protein] + ADP + H(+). Its activity is regulated as follows. Activated by tyrosine and threonine phosphorylation. This is Extracellular signal-regulated kinase 1 (CEK1) from Candida albicans (strain SC5314 / ATCC MYA-2876) (Yeast).